The following is a 1439-amino-acid chain: ABC transporter G family member 14 (1439 aa).

Residues 1–17 (MEENSNKFEQELKEIGQ) show a composition bias toward basic and acidic residues. The interval 1–21 (MEENSNKFEQELKEIGQDRNQ) is disordered. Residues 117–370 (FSILNFFKPS…FMSLGFDCEP (254 aa)) enclose the ABC transporter 1 domain. The region spanning 475 to 700 (LNDKFGLFTK…GSEFDAYRIC (226 aa)) is the ABC transmembrane type-2 1 domain. The next 6 membrane-spanning stretches (helical) occupy residues 479-499 (FGLFTKYLSVLIQAFVYSSVF), 516-536 (ILSAVIFNAFLSVGEMSMTFI), 564-584 (IPFTLLQVFLFSIIAYFMFGL), 589-609 (GKFFIFSFTLVGASLACTALF), 614-634 (YLCPSMYIAQNISNVFIIFML), and 734-754 (IIVYCWWIFFVICNMLAMEYI). The ABC transporter 2 domain occupies 805 to 1049 (FTWQNIRYTV…LTSYFERHGV (245 aa)). 841-848 (GSSGAGKT) contacts ATP. The ABC transmembrane type-2 2 domain occupies 1141 to 1366 (YYTYGSFVQS…YNTCQNYTSA (226 aa)). The next 6 membrane-spanning stretches (helical) occupy residues 1144–1164 (YGSFVQSALCGLIIGFTFWNL), 1175–1195 (IFFIFEALMLGILLIFVVMPQ), 1217–1237 (FAISIVVVELPFIVISGTIFF), 1256–1276 (FYFWFIFVIFLFFCVSFGQAV), 1283–1303 (MFFAMTLIPLLIVFLFLFSGV), and 1413–1433 (VGIIICFFVFNILMVILFVYL).

Belongs to the ABC transporter superfamily. ABCG family. PDR (TC 3.A.1.205) subfamily.

The protein localises to the membrane. This chain is ABC transporter G family member 14 (abcG14), found in Dictyostelium discoideum (Social amoeba).